The primary structure comprises 459 residues: tRNA modification GTPase MnmE (459 aa).

(6S)-5-formyl-5,6,7,8-tetrahydrofolate contacts are provided by arginine 23, glutamate 85, and arginine 124. The region spanning 221 to 380 (GLSTAIIGRP…LEKAIADTFF (160 aa)) is the TrmE-type G domain. Position 231 (asparagine 231) interacts with K(+). GTP is bound by residues 231-236 (NVGKSS), 250-256 (TEIPGTT), and 275-278 (DTAG). Serine 235 contributes to the Mg(2+) binding site. The K(+) site is built by threonine 250, isoleucine 252, and threonine 255. Mg(2+) is bound at residue threonine 256. Lysine 459 is a binding site for (6S)-5-formyl-5,6,7,8-tetrahydrofolate.

This sequence belongs to the TRAFAC class TrmE-Era-EngA-EngB-Septin-like GTPase superfamily. TrmE GTPase family. In terms of assembly, homodimer. Heterotetramer of two MnmE and two MnmG subunits. It depends on K(+) as a cofactor.

It localises to the cytoplasm. Functionally, exhibits a very high intrinsic GTPase hydrolysis rate. Involved in the addition of a carboxymethylaminomethyl (cmnm) group at the wobble position (U34) of certain tRNAs, forming tRNA-cmnm(5)s(2)U34. This Oceanobacillus iheyensis (strain DSM 14371 / CIP 107618 / JCM 11309 / KCTC 3954 / HTE831) protein is tRNA modification GTPase MnmE.